Reading from the N-terminus, the 186-residue chain is Holliday junction branch migration complex subunit RuvA (186 aa).

The domain I stretch occupies residues 1 to 61; the sequence is MYRYIKGIVT…EDIFQLYGFK (61 aa). Residues 62–134 are domain II; it reads DEETLNLFLK…LKGKLVNDEL (73 aa). Positions 134–137 are flexible linker; it reads LDMQ. The interval 138 to 186 is domain III; that stretch reads LLSDNSKDVAAALEALGYNKKEIAKSLKHVNFDQDLNKALKEALAILLK.

This sequence belongs to the RuvA family. Homotetramer. Forms an RuvA(8)-RuvB(12)-Holliday junction (HJ) complex. HJ DNA is sandwiched between 2 RuvA tetramers; dsDNA enters through RuvA and exits via RuvB. An RuvB hexamer assembles on each DNA strand where it exits the tetramer. Each RuvB hexamer is contacted by two RuvA subunits (via domain III) on 2 adjacent RuvB subunits; this complex drives branch migration. In the full resolvosome a probable DNA-RuvA(4)-RuvB(12)-RuvC(2) complex forms which resolves the HJ.

It is found in the cytoplasm. Functionally, the RuvA-RuvB-RuvC complex processes Holliday junction (HJ) DNA during genetic recombination and DNA repair, while the RuvA-RuvB complex plays an important role in the rescue of blocked DNA replication forks via replication fork reversal (RFR). RuvA specifically binds to HJ cruciform DNA, conferring on it an open structure. The RuvB hexamer acts as an ATP-dependent pump, pulling dsDNA into and through the RuvAB complex. HJ branch migration allows RuvC to scan DNA until it finds its consensus sequence, where it cleaves and resolves the cruciform DNA. The sequence is that of Holliday junction branch migration complex subunit RuvA from Acholeplasma laidlawii (strain PG-8A).